The following is a 438-amino-acid chain: Na(+)/H(+) antiporter NhaA (438 aa).

11 helical membrane-spanning segments follow: residues F23–L43, F62–L82, S104–L124, G133–G153, V162–F182, T185–L205, V221–L241, F302–V322, L337–I357, W372–I392, and I410–L430.

It belongs to the NhaA Na(+)/H(+) (TC 2.A.33) antiporter family.

It is found in the cell inner membrane. The enzyme catalyses Na(+)(in) + 2 H(+)(out) = Na(+)(out) + 2 H(+)(in). Na(+)/H(+) antiporter that extrudes sodium in exchange for external protons. This is Na(+)/H(+) antiporter NhaA from Helicobacter pylori (strain HPAG1).